A 159-amino-acid polypeptide reads, in one-letter code: 2-C-methyl-D-erythritol 2,4-cyclodiphosphate synthase (159 aa).

Residues aspartate 8 and histidine 10 each contribute to the a divalent metal cation site. 4-CDP-2-C-methyl-D-erythritol 2-phosphate is bound by residues 8 to 10 and 34 to 35; these read DVH and HS. Histidine 42 serves as a coordination point for a divalent metal cation. Residues 56-58, 61-65, 100-106, 132-135, phenylalanine 139, and arginine 142 each bind 4-CDP-2-C-methyl-D-erythritol 2-phosphate; these read DIG, FPDTD, AQAPKML, and TTTE.

Belongs to the IspF family. As to quaternary structure, homotrimer. A divalent metal cation serves as cofactor.

It catalyses the reaction 4-CDP-2-C-methyl-D-erythritol 2-phosphate = 2-C-methyl-D-erythritol 2,4-cyclic diphosphate + CMP. It participates in isoprenoid biosynthesis; isopentenyl diphosphate biosynthesis via DXP pathway; isopentenyl diphosphate from 1-deoxy-D-xylulose 5-phosphate: step 4/6. Functionally, involved in the biosynthesis of isopentenyl diphosphate (IPP) and dimethylallyl diphosphate (DMAPP), two major building blocks of isoprenoid compounds. Catalyzes the conversion of 4-diphosphocytidyl-2-C-methyl-D-erythritol 2-phosphate (CDP-ME2P) to 2-C-methyl-D-erythritol 2,4-cyclodiphosphate (ME-CPP) with a corresponding release of cytidine 5-monophosphate (CMP). This Escherichia coli O139:H28 (strain E24377A / ETEC) protein is 2-C-methyl-D-erythritol 2,4-cyclodiphosphate synthase.